The sequence spans 422 residues: Growth arrest-specific protein 7 (422 aa).

The tract at residues 1 to 117 (MATALQKPGM…SPGRKQSKEN (117 aa)) is disordered. A WW domain is found at 22 to 55 (VILPPGWHSYLSPQGRRYYVNTTTNETTWERPSS). The segment covering 41–52 (VNTTTNETTWER) has biased composition (polar residues). Residues 53-65 (PSSSPGISASPGP) are compositionally biased toward low complexity. Phosphoserine is present on residues S62 and S108. Residues 95 to 117 (RKSTGDSQNLGSSSPGRKQSKEN) are compositionally biased toward polar residues. The F-BAR domain occupies 141 to 402 (TEWSYCDYFW…LLRKVDPAKD (262 aa)). Positions 254-329 (ENFKKDMKKC…RKSTQAGDDL (76 aa)) form a coiled coil.

It is found in the cytoplasm. Functionally, may play a role in promoting maturation and morphological differentiation of cerebellar neurons. This chain is Growth arrest-specific protein 7 (Gas7), found in Rattus norvegicus (Rat).